The following is a 213-amino-acid chain: Large ribosomal subunit protein uL3 (213 aa).

Gln151 is modified (N5-methylglutamine).

It belongs to the universal ribosomal protein uL3 family. As to quaternary structure, part of the 50S ribosomal subunit. Forms a cluster with proteins L14 and L19. Post-translationally, methylated by PrmB.

One of the primary rRNA binding proteins, it binds directly near the 3'-end of the 23S rRNA, where it nucleates assembly of the 50S subunit. The chain is Large ribosomal subunit protein uL3 from Rhizobium leguminosarum bv. trifolii (strain WSM2304).